The following is a 387-amino-acid chain: Protein spaetzle 5 (387 aa).

The first 29 residues, 1 to 29, serve as a signal peptide directing secretion; it reads MTKSIKRPPPFSCKQVLLTYVILAYTVAA. Residues 30 to 284 constitute a propeptide that is removed on maturation; that stretch reads HSSPPPCGLY…PLKKRSRTKR (255 aa). Positions 133–197 are disordered; it reads QTPFGGNPQR…SGGHLYINQS (65 aa). N-linked (GlcNAc...) asparagine glycans are attached at residues asparagine 195 and asparagine 204. 2 disordered regions span residues 219 to 256 and 269 to 291; these read KQRQ…QSKR and GVEA…GRST. Residues 237–247 show a composition bias toward acidic residues; the sequence is QTEEAEEQDNP. A compositionally biased stretch (basic residues) spans 276-286; the sequence is LKKRSRTKRQS. The region spanning 291-384 is the Spaetzle domain; it reads TLCQTTSQFI…WFPSCCVCTI (94 aa). Cystine bridges form between cysteine 293-cysteine 350, cysteine 331-cysteine 380, and cysteine 340-cysteine 382.

In terms of assembly, homodimer; disulfide-linked. In terms of tissue distribution, detected in the fan-shaped body which is a component of the locomotion center in the central nervous system (CNS) (at protein level).

Functionally, neurotrophin which may function as a ligand for the Toll-related receptors Toll-6 and Toll-7. Binds to Toll-7 and Toll-6, and probably acts as their ligands in the promotion of motor axon targeting and neuronal survival in the central nervous system (CNS). Involved in synaptic targeting of ISNb/d motorneurons and also some SNa motorneurons. May be involved in the normal development of specific neurons at the neuromuscular junction. The protein is Protein spaetzle 5 of Drosophila melanogaster (Fruit fly).